The sequence spans 126 residues: Large ribosomal subunit protein bL12 (126 aa).

The protein belongs to the bacterial ribosomal protein bL12 family. As to quaternary structure, homodimer. Part of the ribosomal stalk of the 50S ribosomal subunit. Forms a multimeric L10(L12)X complex, where L10 forms an elongated spine to which 2 to 4 L12 dimers bind in a sequential fashion. Binds GTP-bound translation factors.

Forms part of the ribosomal stalk which helps the ribosome interact with GTP-bound translation factors. Is thus essential for accurate translation. The sequence is that of Large ribosomal subunit protein bL12 from Streptococcus pyogenes serotype M28 (strain MGAS6180).